The following is a 94-amino-acid chain: UPF0298 protein SEQ_1830 (94 aa).

This sequence belongs to the UPF0298 family.

The protein resides in the cytoplasm. The sequence is that of UPF0298 protein SEQ_1830 from Streptococcus equi subsp. equi (strain 4047).